A 158-amino-acid polypeptide reads, in one-letter code: MAEVGSKSVLFVCLGNICRSPIAEAVFRKLVTDENVSDNWRIDSAATSTYEVGNPPDYRGQNCMKKHGIHMQHIARQITREDFATFDYILCMDESNLRDLNRKSNQVKNCKAKIELLGSYDPQKQLIIEDPYYGNDSDFEVVYQQCLRCCKAFLEKTH.

Residue Ala2 is modified to N-acetylalanine. Cys13 functions as the Nucleophile in the catalytic mechanism. Residue Arg19 is part of the active site. Catalysis depends on Asp130, which acts as the Proton donor. 2 positions are modified to phosphotyrosine: Tyr132 and Tyr133.

It belongs to the low molecular weight phosphotyrosine protein phosphatase family. Interacts with EPHA2; dephosphorylates EPHA2. Interacts with EPHB1. In terms of assembly, interacts with the SH3 domain of SPTAN1. There is no interaction observed for isoform 2. Post-translationally, phosphorylated by LCK. Phosphorylation at Tyr-132 increases its phosphatase activity.

It localises to the cytoplasm. The enzyme catalyses O-phospho-L-tyrosyl-[protein] + H2O = L-tyrosyl-[protein] + phosphate. The catalysed reaction is a phosphate monoester + H2O = an alcohol + phosphate. Its activity is regulated as follows. Inhibited by sulfhydryl reagents. In terms of biological role, acts on tyrosine phosphorylated proteins, low-MW aryl phosphates and natural and synthetic acyl phosphates with differences in substrate specificity between isoform 1 and isoform 2. The polypeptide is Low molecular weight phosphotyrosine protein phosphatase (Rattus norvegicus (Rat)).